Here is a 72-residue protein sequence, read N- to C-terminus: Translation initiation factor IF-1 (72 aa).

Positions 1-72 (MSKEDLIEFT…SKGRITFRFK (72 aa)) constitute an S1-like domain.

It belongs to the IF-1 family. In terms of assembly, component of the 30S ribosomal translation pre-initiation complex which assembles on the 30S ribosome in the order IF-2 and IF-3, IF-1 and N-formylmethionyl-tRNA(fMet); mRNA recruitment can occur at any time during PIC assembly.

Its subcellular location is the cytoplasm. One of the essential components for the initiation of protein synthesis. Stabilizes the binding of IF-2 and IF-3 on the 30S subunit to which N-formylmethionyl-tRNA(fMet) subsequently binds. Helps modulate mRNA selection, yielding the 30S pre-initiation complex (PIC). Upon addition of the 50S ribosomal subunit IF-1, IF-2 and IF-3 are released leaving the mature 70S translation initiation complex. In Gluconobacter oxydans (strain 621H) (Gluconobacter suboxydans), this protein is Translation initiation factor IF-1.